The following is a 383-amino-acid chain: Trichodiene synthase (383 aa).

It belongs to the trichodiene synthase family.

It carries out the reaction (2E,6E)-farnesyl diphosphate = trichodiene + diphosphate. It participates in sesquiterpene biosynthesis; trichothecene biosynthesis. TS is a member of the terpene cyclase group of enzymes. It catalyzes the isomerization and cyclization of farnesyl pyro-phosphate to form trichodiene, the first cyclic intermediate in the biosynthetic pathway for trichothecenes. It serves to branch trichothecene biosynthesis from the isoprenoid pathway. This Gibberella pulicaris protein is Trichodiene synthase (TRI5).